The primary structure comprises 68 residues: Potassium channel toxin epsilon-KTx 1.2 (68 aa).

The first 26 residues, 1–26 (MKFSCGFLLIFLVLSAMIATFSEVEA), serve as a signal peptide directing secretion. 4 disulfides stabilise this stretch: Cys30/Cys38, Cys33/Cys54, Cys37/Cys47, and Cys42/Cys52. Tyr55 carries the tyrosine amide modification. A propeptide spanning residues 57-68 (RSDLNEEFENYQ) is cleaved from the precursor.

Belongs to the short scorpion toxin superfamily. Potassium channel inhibitor family. Epsilon-KTx 01 subfamily. As to expression, expressed by the venom gland.

It is found in the secreted. Its function is as follows. Potassium channel blocker. At 3 uM, this toxin blocks voltage-gated potassium channels rKv1.2/KCNA2 (5%), hKv1.3/KCNA3 (10%),rKv1.4/KCNA4 (20%), Kv11/hERG (24%), and Shaker-IR (27%). This chain is Potassium channel toxin epsilon-KTx 1.2, found in Tityus serrulatus (Brazilian scorpion).